Here is a 76-residue protein sequence, read N- to C-terminus: uncharacterized protein (76 aa).

The helical transmembrane segment at 40–60 (IVLNLVVLVGVVPLTWMFLGQ) threads the bilayer.

It localises to the membrane. This is an uncharacterized protein from Dictyostelium discoideum (Social amoeba).